The sequence spans 271 residues: Glutamate racemase 3 (271 aa).

Substrate contacts are provided by residues 15–16 and 47–48; these read DS and YG. Cysteine 78 acts as the Proton donor/acceptor in catalysis. Position 79-80 (79-80) interacts with substrate; that stretch reads NT. Cysteine 185 serves as the catalytic Proton donor/acceptor. Residue 186 to 187 participates in substrate binding; that stretch reads TH.

The protein belongs to the aspartate/glutamate racemases family.

The enzyme catalyses L-glutamate = D-glutamate. Its pathway is cell wall biogenesis; peptidoglycan biosynthesis. Functionally, provides the (R)-glutamate required for cell wall biosynthesis. This chain is Glutamate racemase 3, found in Caldanaerobacter subterraneus subsp. tengcongensis (strain DSM 15242 / JCM 11007 / NBRC 100824 / MB4) (Thermoanaerobacter tengcongensis).